The following is a 97-amino-acid chain: UPF0235 protein Aasi_0294 (97 aa).

It belongs to the UPF0235 family.

The chain is UPF0235 protein Aasi_0294 from Amoebophilus asiaticus (strain 5a2).